Consider the following 953-residue polypeptide: Serine-aspartate repeat-containing protein C (953 aa).

A signal peptide spans 1-50; sequence MNNKKTATNRKGMIPNRLNKFSIRKYSVGTASILVGTTLIFGLSGHEAKA. The interval 51–160 is disordered; that stretch reads AEHTNGELNQ…AKNVSTTPKT (110 aa). The segment at 51–495 is ligand binding A region; sequence AEHTNGELNQ…GSSTANGDQK (445 aa). A compositionally biased stretch (polar residues) spans 56 to 71; it reads GELNQSKNETTAPSEN. Residues 72-83 show a composition bias toward basic and acidic residues; sequence KTTEKVDSRQLK. Polar residues predominate over residues 84–114; the sequence is DNTQTATADQPKVTMSDSATVKETSSNMQSP. Low complexity predominate over residues 115–132; it reads QNATASQSTTQTSNVTTN. A compositionally biased stretch (polar residues) spans 133–160; it reads DKSSTTYSNETDKSNLTQAKNVSTTPKT. CNA-B domains lie at 496–606 and 607–717; these read KYNL…YKTP and KYSL…EEET. Residues 678 to 933 form a disordered region; sequence TQTGTNTTED…NNSNNGTLFG (256 aa). Acidic residues-rich tracts occupy residues 685–695 and 712–892; these read TEDDKDADGGE and YYEE…DSDS. Positions 916–920 match the LPXTG sorting signal motif; sequence LPETG. The span at 918–933 shows a compositional bias: low complexity; sequence ETGSENNNSNNGTLFG. A Pentaglycyl murein peptidoglycan amidated threonine modification is found at threonine 919. Residues 920–953 constitute a propeptide, removed by sortase; it reads GSENNNSNNGTLFGGLFAALGSLLLFGRRKKQNK.

The protein belongs to the serine-aspartate repeat-containing protein (SDr) family. Homodimerizes; via N2-Domain. Interacts with host NRXN1; this interaction mediates bacterial attachment to host cells.

The protein localises to the secreted. It localises to the cell wall. In terms of biological role, cell surface-associated calcium-binding protein which plays an important role in adhesion and pathogenesis. Mediates interactions with components of the extracellular matrix such as host NRXN1 to promote bacterial adhesion. The chain is Serine-aspartate repeat-containing protein C (sdrC) from Staphylococcus aureus (strain Mu50 / ATCC 700699).